Reading from the N-terminus, the 310-residue chain is Cytosolic Fe-S cluster assembly factor Nubp1 homolog (310 aa).

The [4Fe-4S] cluster site is built by Cys8, Cys22, Cys25, and Cys31. Residue 62–69 (GKGGVGKS) participates in ATP binding. 2 residues coordinate [4Fe-4S] cluster: Cys239 and Cys242.

The protein belongs to the Mrp/NBP35 ATP-binding proteins family. NUBP1/NBP35 subfamily. In terms of assembly, heterotetramer of 2 Nubp1 and 2 Nubp2 chains. The cofactor is [4Fe-4S] cluster.

It is found in the cytoplasm. Its function is as follows. Component of the cytosolic iron-sulfur (Fe/S) protein assembly (CIA) machinery. Required for maturation of extramitochondrial Fe-S proteins. The Nubp1-Nubp2 heterotetramer forms a Fe-S scaffold complex, mediating the de novo assembly of an Fe-S cluster and its transfer to target apoproteins. This is Cytosolic Fe-S cluster assembly factor Nubp1 homolog from Drosophila willistoni (Fruit fly).